The primary structure comprises 460 residues: Probable asparagine--tRNA ligase, mitochondrial (460 aa).

It belongs to the class-II aminoacyl-tRNA synthetase family.

Its subcellular location is the mitochondrion matrix. It catalyses the reaction tRNA(Asn) + L-asparagine + ATP = L-asparaginyl-tRNA(Asn) + AMP + diphosphate + H(+). This is Probable asparagine--tRNA ligase, mitochondrial (asnS2) from Dictyostelium discoideum (Social amoeba).